A 56-amino-acid polypeptide reads, in one-letter code: Trypsin inhibitor 1 (56 aa).

Residues 1 to 25 (MATTMAKLITLVVLAILAFVEVSVS) form the signal peptide. The propeptide occupies 26-39 (GYKTSISTITIEDN). Positions 40–53 (GRCTKSIPPICFPD) form a cross-link, cyclopeptide (Gly-Asp). A disulfide bridge connects residues C42 and C50. The propeptide occupies 54-56 (GRP).

Post-translationally, this is a cyclic peptide.

Functionally, inhibits trypsin, cathepsin G, elastase, chymotrypsin and thrombin. Does not inhibit factor Xa. The sequence is that of Trypsin inhibitor 1 from Helianthus annuus (Common sunflower).